Reading from the N-terminus, the 388-residue chain is Subtilisin-like serine protease AsES (388 aa).

A signal peptide spans 1–15; that stretch reads MRLSLVLALLPVAFG. A propeptide spans 16–105 (removed in mature form); that stretch reads APTRRDEPAP…IEQDAIVTLA (90 aa). One can recognise a Peptidase S8 domain in the interval 114–388; sequence PWGLARISTR…RLAFNGNPSG (275 aa). Residues cysteine 141 and cysteine 230 are joined by a disulfide bond. Residues aspartate 146 and histidine 176 each act as charge relay system in the active site. Asparagine 232 and asparagine 237 each carry an N-linked (GlcNAc...) asparagine glycan. Cysteine 285 and cysteine 357 are disulfide-bonded. The Charge relay system role is filled by serine 331.

It belongs to the peptidase S8 family.

It localises to the secreted. With respect to regulation, the elicitor proteolytic activity is completely inhibited by PMSF. The activity is also significantly reduced by aprotinin (leading to 37% residual activity), by leupeptin (leading to 54% residual activity), by the ovomucoid trypsin inhibitor (leading to 65% residual activity), and by p-aminobenzamidine (leading to 26% residual activity). Functionally, extracellular elicitor protein that induces a strong defense response in strawberry and confers both local and systemic plant resistance against the fungal pathogen Colletotricum acutatum, the casual agent of anthracnose disease. AsES activates a cascade of defense responses, including calcium influx, oxidative burst, hypersensitive cell-death response (HR), accumulation of autofluorescent compounds, cell-wall reinforcement with callose and lignin deposition, salicylic acid accumulation, and expression of defense-related genes, such as PR1, PG1, MYB30, RBOH-D, RBOH-F, CHI23, and FLS. The oxidative burst consists in a progressive extracellular accumulation of H(2)O(2) that starts immediately after the contact with AsES and is preceded by a rapid and transient cell membrane depolarization. During this phase takes place also a rapid intracellular accumulation of NO at the chloroplasts. After the first extracellular H(2)O(2) production phase, two intracellular H(2)O(2) accumulation events occur, the first 2 hours after induction, and the second 7 hours after induction. AsES also produces a transient increase of ion leakage, and a progressive alkalinization of the extracellular medium. Confers also local and systemic plant resistance against Botrytis cinerea in Arabidopsis thaliana. Systemic, but not local resistance is dependent on the length of exposure to AsES. The protection to B.cinerea is due to the induction of the plant defenses via the salicylic acid, jasmonic acid and ethylene signaling pathways. Exhibits subtilisin-like proteolytic activity which is necessary but not sufficient for its elicitor function in strawberry plants. Probably induces defense by means of proteolysis of one or multiple host proteins that are specific targets of this protease. The protein is Subtilisin-like serine protease AsES of Sarocladium strictum (Black bundle disease fungus).